Here is a 265-residue protein sequence, read N- to C-terminus: MAIKEKQVQDYGENPIEVRDSDHYQNEYIEGFVEKWDELINWHARSSSEGEFFIKTLKEHGAKRVLDAATGTGFHSIRLIEAGFDVASVDGSVEMLVKAFENATRKDQILRTVHSDWRQVTRHIQERFDAVICLGNSFTHLFSEEDRRKTLAEFYSVLKHDGILILDQRNYDLILDEGFKSKHTYYYCGDNVKAEPEYVDDGLARFRYEFPDQSVYHLNMFPLRKDYVRRLLHEVGFQDITTYGDFQETYHQDDPDFYIHVAKKD.

S-adenosyl-L-methionine is bound by residues Y28, W36, R45, A69, D90, D116–W117, and L134. Residues N136, R169, and Y208 each contribute to the substrate site.

It belongs to the class I-like SAM-binding methyltransferase superfamily. Glycine N-methyltransferase family. As to quaternary structure, monomer.

It carries out the reaction glycine + 2 S-adenosyl-L-methionine = N,N-dimethylglycine + 2 S-adenosyl-L-homocysteine + 2 H(+). It catalyses the reaction glycine + S-adenosyl-L-methionine = sarcosine + S-adenosyl-L-homocysteine + H(+). The catalysed reaction is sarcosine + S-adenosyl-L-methionine = N,N-dimethylglycine + S-adenosyl-L-homocysteine + H(+). The protein operates within amine and polyamine biosynthesis; betaine biosynthesis via glycine pathway; betaine from glycine: step 1/3. Its pathway is amine and polyamine biosynthesis; betaine biosynthesis via glycine pathway; betaine from glycine: step 2/3. With respect to regulation, inhibited by acetate, dimethylglycine and S-adenosyl-L-homocysteine. Catalyzes the methylation of glycine and sarcosine to sarcosine and dimethylglycine, respectively, with S-adenosylmethionine (AdoMet) acting as the methyl donor. The sequence is that of Glycine/sarcosine N-methyltransferase from Aphanothece halophytica.